Consider the following 873-residue polypeptide: Tetratricopeptide repeat protein 16 (873 aa).

The interval 1 to 20 is disordered; the sequence is MTDSDEDALKVDQGPSRDIP. TPR repeat units lie at residues 61-94, 96-128, 136-169, 251-284, 285-318, 331-364, 365-398, and 406-439; these read VREY…DPQL, DFYA…QQDN, TFVL…QPEK, AQQA…NPLD, PSLF…VTED, LLTY…EQQE, KGLY…SPQD, and GLLQ…NPQK. 2 disordered regions span residues 553–626 and 639–873; these read EELK…TSET and SATA…YEAV. Residues 571 to 582 are compositionally biased toward acidic residues; it reads GEAEAPEEEEEK. Over residues 583–593 the composition is skewed to basic and acidic residues; it reads EKEKKEEKKSE. Polar residues-rich tracts occupy residues 600-626, 639-663, and 675-693; these read ASLS…TSET, SATA…NNRE, and TQGQ…SQRR. Basic residues predominate over residues 694 to 708; the sequence is NSSKTKATIHKRNSS. Residues 709-750 are compositionally biased toward polar residues; it reads KTKATQSQRRNSSKTRATQGQGQSSSKTEATQGQRQSSSEIE. The span at 763-784 shows a compositional bias: basic residues; the sequence is KTTRSPRQRPRKVKAARGRSWR. Polar residues-rich tracts occupy residues 800 to 828 and 836 to 860; these read RSST…GQRS and GKSQ…SLSK.

The polypeptide is Tetratricopeptide repeat protein 16 (TTC16) (Homo sapiens (Human)).